The primary structure comprises 251 residues: NADH-quinone oxidoreductase subunit B (251 aa).

[4Fe-4S] cluster is bound by residues Cys38, Cys39, Cys104, and Cys134. Residues 208-251 (RKGLPPGSMTDVGWIPPEARERLKAGRGAGASGSGEREEGKEGA) form a disordered region. The span at 242-251 (GEREEGKEGA) shows a compositional bias: basic and acidic residues.

Belongs to the complex I 20 kDa subunit family. NDH-1 is composed of 14 different subunits. Subunits NuoB, C, D, E, F, and G constitute the peripheral sector of the complex. The cofactor is [4Fe-4S] cluster.

It is found in the cell membrane. It catalyses the reaction a quinone + NADH + 5 H(+)(in) = a quinol + NAD(+) + 4 H(+)(out). Its function is as follows. NDH-1 shuttles electrons from NADH, via FMN and iron-sulfur (Fe-S) centers, to quinones in the respiratory chain. The immediate electron acceptor for the enzyme in this species is believed to be a menaquinone. Couples the redox reaction to proton translocation (for every two electrons transferred, four hydrogen ions are translocated across the cytoplasmic membrane), and thus conserves the redox energy in a proton gradient. The polypeptide is NADH-quinone oxidoreductase subunit B (Rubrobacter xylanophilus (strain DSM 9941 / JCM 11954 / NBRC 16129 / PRD-1)).